The chain runs to 465 residues: Fumarate hydratase class II (465 aa).

Residues 98 to 100 (SGT), Arg126, 129 to 132 (HPND), 139 to 141 (SSN), and Thr187 contribute to the substrate site. Catalysis depends on His188, which acts as the Proton donor/acceptor. Residue Ser318 is part of the active site. Substrate contacts are provided by residues Ser319 and 324–326 (KVN).

Belongs to the class-II fumarase/aspartase family. Fumarase subfamily. In terms of assembly, homotetramer.

Its subcellular location is the cytoplasm. It catalyses the reaction (S)-malate = fumarate + H2O. It functions in the pathway carbohydrate metabolism; tricarboxylic acid cycle; (S)-malate from fumarate: step 1/1. Its function is as follows. Involved in the TCA cycle. Catalyzes the stereospecific interconversion of fumarate to L-malate. The sequence is that of Fumarate hydratase class II from Yersinia pestis.